A 648-amino-acid chain; its full sequence is Mitochondrial Rho GTPase 1 (648 aa).

The Cytoplasmic segment spans residues 1-619 (MARYAAGAVD…KHYNRLINRS (619 aa)). A Phosphoserine modification is found at Ser-14. The region spanning 15-182 (PKSVRIVVVG…FYYAQKTVLH (168 aa)) is the Miro 1 domain. 2 consecutive EF-hand domains span residues 198–233 (RCVR…CFHA) and 319–354 (AAID…APES). 9 residues coordinate Ca(2+): Asp-211, Asp-213, Asp-215, Glu-222, Asp-332, Asp-334, Asp-336, Asn-338, and Glu-343. The Miro 2 domain occupies 427–595 (RKVFQCFVFG…FRKILTAAQH (169 aa)). A helical transmembrane segment spans residues 620–640 (LMAVSIGAAAVVVGLAAYRVY). The Mitochondrial intermembrane segment spans residues 641–648 (ATRKSSSA).

The protein belongs to the mitochondrial Rho GTPase family. In terms of tissue distribution, expressed in roots, leaves, stems, flowers and siliques.

The protein localises to the mitochondrion outer membrane. Its function is as follows. Mitochondrial GTPase required to maintain proper development, morphology and intracellular distribution of mitochondria, which in turn are essential for the progress of embryonic cell division, development of haploid male and female gametes, and pollen tube growth. In Arabidopsis thaliana (Mouse-ear cress), this protein is Mitochondrial Rho GTPase 1.